The primary structure comprises 237 residues: Uridylate kinase (237 aa).

Position 12 to 15 (12 to 15 (KLSG)) interacts with ATP. The involved in allosteric activation by GTP stretch occupies residues 20–25 (GENGFG). G54 provides a ligand contact to UMP. Residues G55 and R59 each contribute to the ATP site. UMP contacts are provided by residues D72 and 133 to 140 (TGNPYFST). Residues Y166 and D169 each contribute to the ATP site.

This sequence belongs to the UMP kinase family. In terms of assembly, homohexamer.

It is found in the cytoplasm. The enzyme catalyses UMP + ATP = UDP + ADP. It functions in the pathway pyrimidine metabolism; CTP biosynthesis via de novo pathway; UDP from UMP (UMPK route): step 1/1. With respect to regulation, allosterically activated by GTP. Inhibited by UTP. In terms of biological role, catalyzes the reversible phosphorylation of UMP to UDP. The protein is Uridylate kinase of Clostridium perfringens (strain ATCC 13124 / DSM 756 / JCM 1290 / NCIMB 6125 / NCTC 8237 / Type A).